Reading from the N-terminus, the 479-residue chain is MSEGEIVQVIGPVVDVKFPIDKNLPDINNALRVIKSEDESIVLEVTLELGDGVLRTIAMESTDGLRRGMKVEDTGAPISVPVGEDTLGRVFNVLGQPIDGGPAFPKDHPREGIHKEAPKYEDLTTSREILETGIKVIDLLEPYVRGGKVGLFGGAGVGKTTIIQELIHNIAQEHGGISVFTGVGERTREGNDLYFEMKASGVLSKTAMVFGQMNEPPGARMRVALTGLTLAEYFRDVEGQDVLLFIDNIFRFTQAGSEVSALLGRMPSAVGYQPTLATEMGQLQERITSTKKGSITSIQAVYVPADDYTDPAPSTTFAYLDATTNLERSLVEQGIYPAVDPLESSSSALDPEVVGQEHYEVATRVQHVLQRYHELQDIISVLGMDELSDEEKLIVARARKVQFFLSQNFFVAEQFTGVPGSYVPIKETIKGFKLILDGHLDDLPEDAFRGVGPIEDVLKKAQEMGVTPSDPEAKALLEK.

153–160 is a binding site for ATP; that stretch reads GGAGVGKT.

Belongs to the ATPase alpha/beta chains family. As to quaternary structure, F-type ATPases have 2 components, CF(1) - the catalytic core - and CF(0) - the membrane proton channel. CF(1) has five subunits: alpha(3), beta(3), gamma(1), delta(1), epsilon(1). CF(0) has three main subunits: a(1), b(2) and c(9-12). The alpha and beta chains form an alternating ring which encloses part of the gamma chain. CF(1) is attached to CF(0) by a central stalk formed by the gamma and epsilon chains, while a peripheral stalk is formed by the delta and b chains.

The protein resides in the cell membrane. The enzyme catalyses ATP + H2O + 4 H(+)(in) = ADP + phosphate + 5 H(+)(out). Its activity is regulated as follows. Increases 2-fold following exposure to low pH. Produces ATP from ADP in the presence of a proton gradient across the membrane. The catalytic sites are hosted primarily by the beta subunits. The protein is ATP synthase subunit beta of Lactobacillus acidophilus (strain ATCC 700396 / NCK56 / N2 / NCFM).